The following is a 204-amino-acid chain: Vacuolar protein-sorting-associated protein 46 (204 aa).

The tract at residues 1 to 103 is interaction with VSP24; it reads MSRNSAAGLE…ASMGQVCKGM (103 aa). S5 is modified (phosphoserine). Coiled-coil stretches lie at residues 9–56 and 109–129; these read LENT…RIYA and NMNLQQITMIMDKFEQQFEDL. Residues 104–204 form an interaction with VSP4 region; the sequence is DKALQNMNLQ…LAQRLRALRG (101 aa). An interaction with VTA1 region spans residues 176-204; sequence NVPEIKAKEVNVDDEKEDKLAQRLRALRG. Residues 185 to 196 are compositionally biased toward basic and acidic residues; sequence VNVDDEKEDKLA. A disordered region spans residues 185 to 204; the sequence is VNVDDEKEDKLAQRLRALRG.

It belongs to the SNF7 family. As to quaternary structure, self-associates. Interacts with VPS4 and VTA1. Interacts with IST1.

The protein resides in the endosome membrane. It is found in the endomembrane system. Class E VPS protein implicated in concentration and sorting of cargo proteins of the multivesicular body (MVB) for incorporation into intralumenal vesicles. The lumenal sequestrated membrane proteins will be targeted into the vacuole after fusion of the endosome with the vacuole. Probably acts as a peripherally associated component of the ESCRT-III complex, which appears to be critical for late steps in MVB sorting, such as membrane invagination and final cargo sorting and recruits late-acting components of the sorting machinery. The MVB pathway requires the sequential function of ESCRT-O, -I,-II and -III complex assemblies. Regulates the membrane association of VPS4. Can stimulate VPS4 ATPase activity directly or via VTA1. In Saccharomyces cerevisiae (strain ATCC 204508 / S288c) (Baker's yeast), this protein is Vacuolar protein-sorting-associated protein 46 (DID2).